The chain runs to 313 residues: Antiviral protein I (313 aa).

An N-terminal signal peptide occupies residues methionine 1–alanine 22. Cystine bridges form between cysteine 56–cysteine 281 and cysteine 107–cysteine 128. Tyrosine 94 is an active-site residue. Substrate is bound at residue valine 95. Serine 143 is a binding site for substrate. The active site involves tyrosine 145. Serine 197 lines the substrate pocket. Catalysis depends on residues glutamate 198 and arginine 201. Residue arginine 201 coordinates substrate. The propeptide occupies asparagine 286–phenylalanine 313.

It belongs to the ribosome-inactivating protein family. Type 1 RIP subfamily. In terms of assembly, monomer. As to expression, expressed in spring leaves (at protein level). Expressed in roots (at protein level).

The enzyme catalyses Endohydrolysis of the N-glycosidic bond at one specific adenosine on the 28S rRNA.. Functionally, possesses antiviral potency. Inhibits viral infection of plants (tobacco mosaic virus). Inhibits protein synthesis. Releases both adenine and guanine from Escherichia coli rRNA in vitro. Activity on guanine is 20 times slower than that on adenine. In Phytolacca americana (American pokeweed), this protein is Antiviral protein I (PAP1).